The following is a 550-amino-acid chain: Amino acid transporter AVT1D (550 aa).

The span at 1–16 (MKLDEEFLHDRDHSFL) shows a compositional bias: basic and acidic residues. The tract at residues 1 to 99 (MKLDEEFLHD…FMPQSSSRRL (99 aa)) is disordered. The segment covering 84–99 (TPPSVSFMPQSSSRRL) has biased composition (polar residues). Transmembrane regions (helical) follow at residues 164–184 (SVLN…PYAI), 189–209 (WLGL…GVLM), 236–256 (FIIS…YIIM), 264–286 (LFPN…IFAI), 308–328 (SVGG…VGAV), 345–365 (LPVT…FPNI), 375–395 (FPLV…AVAV), 424–444 (VWTA…PIVM), 459–479 (GVSI…ALSV), 481–501 (FFAI…ALIF), and 521–541 (LCIF…YSAI).

Belongs to the amino acid/polyamine transporter 2 family. Amino acid/auxin permease (AAAP) (TC 2.A.18.5) subfamily.

The protein resides in the membrane. The sequence is that of Amino acid transporter AVT1D from Arabidopsis thaliana (Mouse-ear cress).